The chain runs to 229 residues: Galactonate operon transcriptional repressor (229 aa).

In terms of domain architecture, HTH gntR-type spans methionine 1–arginine 71. The segment at residues glutamate 31–arginine 50 is a DNA-binding region (H-T-H motif). Zn(2+) is bound by residues aspartate 146, histidine 150, and histidine 195.

Homodimer.

Its activity is regulated as follows. D-galactonate binds DgoR and induces a conformational change in the protein, which decreases its affinity for DNA and consequently derepresses transcription of the dgoRKADT operon. Its function is as follows. Involved in the regulation of D-galactonate metabolism. Represses the expression of the dgoRKADT operon by binding to two closely spaced inverted repeats in the cis-acting element, which overlap with the D-galactonate responsive dgo promoter. Employs a derepression mechanism using D-galactonate as a specific effector molecule. This chain is Galactonate operon transcriptional repressor, found in Escherichia coli (strain K12).